Here is a 315-residue protein sequence, read N- to C-terminus: Tetratricopeptide repeat protein 23-like (315 aa).

A disordered region spans residues 28 to 56; that stretch reads KIPEHQRTDESSPTSGSEESEEDTKAKEK. 3 coiled-coil regions span residues 65–90, 179–200, and 250–280; these read REKLAQSQKKIAQLIKGKKNIEANKE, REAYFNLQKSERNMKELRESYK, and SELVSLYQEIAQIEQLRRNHEQAIQYLHQAH.

Its subcellular location is the cytoplasm. It localises to the cytoskeleton. It is found in the microtubule organizing center. The protein resides in the centrosome. The protein localises to the spindle. Its subcellular location is the midbody. The protein is Tetratricopeptide repeat protein 23-like (TTC23L) of Bos taurus (Bovine).